Reading from the N-terminus, the 421-residue chain is uncharacterized protein (421 aa).

This is an uncharacterized protein from Caenorhabditis elegans.